The sequence spans 42 residues: TKYYGNGVYCNSKKCWVDWGQAAGGIGQTVVXGWLGGAIPGK.

Cys-10 and Cys-15 form a disulfide bridge.

Belongs to the bacteriocin class IIA/YGNGV family.

Its subcellular location is the secreted. Its function is as follows. Has antimicrobial activity. The protein is Bacteriocin bavaricin-MN of Latilactobacillus sakei (Lactobacillus sakei).